The primary structure comprises 90 residues: Barrier-to-autointegration factor (90 aa).

A phosphoserine mark is found at serine 2 and serine 3. Threonine 4 is modified (phosphothreonine). A Phosphoserine modification is found at serine 5.

Belongs to the BAF family. Homodimer.

Its subcellular location is the nucleus. It is found in the chromosome. The protein localises to the nucleus envelope. It localises to the cytoplasm. Functionally, non-specific DNA-binding protein that plays key roles in mitotic nuclear reassembly, chromatin organization, DNA damage response, gene expression and intrinsic immunity against foreign DNA. Contains two non-specific double-stranded DNA (dsDNA)-binding sites which promote DNA cross-bridging. Plays a key role in nuclear membrane reformation at the end of mitosis by driving formation of a single nucleus in a spindle-independent manner. Transiently cross-bridges anaphase chromosomes via its ability to bridge distant DNA sites, leading to the formation of a dense chromatin network at the chromosome ensemble surface that limits membranes to the surface. Also acts as a negative regulator of innate immune activation by restricting CGAS activity toward self-DNA upon acute loss of nuclear membrane integrity. Outcompetes CGAS for DNA-binding, thereby preventing CGAS activation and subsequent damaging autoinflammatory responses. Also involved in DNA damage response; acts by inhibiting the ADP-ribosyltransferase activity of PARP1. Involved in the recognition of exogenous dsDNA in the cytosol: associates with exogenous dsDNA immediately after its appearance in the cytosol at endosome breakdown and is required to avoid autophagy. This chain is Barrier-to-autointegration factor (banf1), found in Danio rerio (Zebrafish).